Here is a 348-residue protein sequence, read N- to C-terminus: Anthranilate phosphoribosyltransferase (348 aa).

5-phospho-alpha-D-ribose 1-diphosphate contacts are provided by residues G87, 90-91 (GD), T95, 97-100 (NIST), 115-123 (KHGNRSASG), and S127. G87 lines the anthranilate pocket. Mg(2+) is bound at residue S99. N118 contacts anthranilate. An anthranilate-binding site is contributed by R173. 2 residues coordinate Mg(2+): D232 and E233.

The protein belongs to the anthranilate phosphoribosyltransferase family. Homodimer. Mg(2+) is required as a cofactor.

It catalyses the reaction N-(5-phospho-beta-D-ribosyl)anthranilate + diphosphate = 5-phospho-alpha-D-ribose 1-diphosphate + anthranilate. Its pathway is amino-acid biosynthesis; L-tryptophan biosynthesis; L-tryptophan from chorismate: step 2/5. Its function is as follows. Catalyzes the transfer of the phosphoribosyl group of 5-phosphorylribose-1-pyrophosphate (PRPP) to anthranilate to yield N-(5'-phosphoribosyl)-anthranilate (PRA). This chain is Anthranilate phosphoribosyltransferase, found in Synechococcus sp. (strain WH7803).